A 464-amino-acid chain; its full sequence is Chromosomal replication initiator protein DnaA (464 aa).

A domain I, interacts with DnaA modulators region spans residues 1–82; the sequence is MKNAAELWHN…GSRLDIQFIE (82 aa). The segment at 82 to 125 is domain II; the sequence is EEGQAKHMLDRQNEEVEVMEVAPAKTKAQKTPKSSDELVMSELG. Residues 126-342 are domain III, AAA+ region; that stretch reads QLNEKYTFDT…GALTRVIAYA (217 aa). The ATP site is built by Gly170, Gly172, Lys173, and Thr174. Residues 343-464 are domain IV, binds dsDNA; it reads NLVGRTIDPN…EQIKHELKHS (122 aa).

This sequence belongs to the DnaA family. Oligomerizes as a right-handed, spiral filament on DNA at oriC.

It localises to the cytoplasm. Its function is as follows. Plays an essential role in the initiation and regulation of chromosomal replication. ATP-DnaA binds to the origin of replication (oriC) to initiate formation of the DNA replication initiation complex once per cell cycle. Binds the DnaA box (a 9 base pair repeat at the origin) and separates the double-stranded (ds)DNA. Forms a right-handed helical filament on oriC DNA; dsDNA binds to the exterior of the filament while single-stranded (ss)DNA is stabiized in the filament's interior. The ATP-DnaA-oriC complex binds and stabilizes one strand of the AT-rich DNA unwinding element (DUE), permitting loading of DNA polymerase. After initiation quickly degrades to an ADP-DnaA complex that is not apt for DNA replication. Binds acidic phospholipids. This is Chromosomal replication initiator protein DnaA from Exiguobacterium sibiricum (strain DSM 17290 / CCUG 55495 / CIP 109462 / JCM 13490 / 255-15).